Here is a 404-residue protein sequence, read N- to C-terminus: Probable tRNA sulfurtransferase (404 aa).

The THUMP domain maps to 60-165; it reads RSVIEALKPV…DEAAYLSHED (106 aa). Residues 183-184, 208-209, Arg265, Gly287, and Gln296 contribute to the ATP site; these read ML and HF.

Belongs to the ThiI family.

Its subcellular location is the cytoplasm. The enzyme catalyses [ThiI sulfur-carrier protein]-S-sulfanyl-L-cysteine + a uridine in tRNA + 2 reduced [2Fe-2S]-[ferredoxin] + ATP + H(+) = [ThiI sulfur-carrier protein]-L-cysteine + a 4-thiouridine in tRNA + 2 oxidized [2Fe-2S]-[ferredoxin] + AMP + diphosphate. The catalysed reaction is [ThiS sulfur-carrier protein]-C-terminal Gly-Gly-AMP + S-sulfanyl-L-cysteinyl-[cysteine desulfurase] + AH2 = [ThiS sulfur-carrier protein]-C-terminal-Gly-aminoethanethioate + L-cysteinyl-[cysteine desulfurase] + A + AMP + 2 H(+). Its pathway is cofactor biosynthesis; thiamine diphosphate biosynthesis. In terms of biological role, catalyzes the ATP-dependent transfer of a sulfur to tRNA to produce 4-thiouridine in position 8 of tRNAs, which functions as a near-UV photosensor. Also catalyzes the transfer of sulfur to the sulfur carrier protein ThiS, forming ThiS-thiocarboxylate. This is a step in the synthesis of thiazole, in the thiamine biosynthesis pathway. The sulfur is donated as persulfide by IscS. This chain is Probable tRNA sulfurtransferase, found in Streptococcus equi subsp. zooepidemicus (strain H70).